A 178-amino-acid chain; its full sequence is Dual-action ribosomal maturation protein DarP (178 aa).

Belongs to the DarP family.

The protein resides in the cytoplasm. Member of a network of 50S ribosomal subunit biogenesis factors which assembles along the 30S-50S interface, preventing incorrect 23S rRNA structures from forming. Promotes peptidyl transferase center (PTC) maturation. The sequence is that of Dual-action ribosomal maturation protein DarP from Haemophilus influenzae (strain 86-028NP).